The following is a 194-amino-acid chain: Prostaglandin-H2 D-isomerase (194 aa).

The first 24 residues, 1 to 24, serve as a signal peptide directing secretion; sequence MAASHTLWMGLVLLGVLGVLQTRA. Position 25 is a pyrrolidone carboxylic acid (glutamine 25). Asparagine 51 is a glycosylation site (N-linked (GlcNAc...) asparagine). The active-site Nucleophile is cysteine 65. An N-linked (GlcNAc...) asparagine glycan is attached at asparagine 78. A disulfide bridge connects residues cysteine 89 and cysteine 189.

Belongs to the calycin superfamily. Lipocalin family. As to quaternary structure, monomer. In the male reproductive system, it is expressed in the testis and epididymis, and is secreted into the seminal fluid.

The protein resides in the rough endoplasmic reticulum. The protein localises to the nucleus membrane. Its subcellular location is the golgi apparatus. It is found in the cytoplasm. It localises to the perinuclear region. The protein resides in the secreted. It catalyses the reaction prostaglandin H2 = prostaglandin D2. Functionally, catalyzes the conversion of PGH2 to PGD2, a prostaglandin involved in smooth muscle contraction/relaxation and a potent inhibitor of platelet aggregation. Involved in a variety of CNS functions, such as sedation, NREM sleep and PGE2-induced allodynia, and may have an anti-apoptotic role in oligodendrocytes. Binds small non-substrate lipophilic molecules, including biliverdin, bilirubin, retinal, retinoic acid and thyroid hormone, and may act as a scavenger for harmful hydrophobic molecules and as a secretory retinoid and thyroid hormone transporter. Possibly involved in development and maintenance of the blood-brain, blood-retina, blood-aqueous humor and blood-testis barrier. It is likely to play important roles in both maturation and maintenance of the central nervous system and male reproductive system. Involved in PLA2G3-dependent maturation of mast cells. PLA2G3 is secreted by immature mast cells and acts on nearby fibroblasts upstream to PTDGS to synthesize PGD2, which in turn promotes mast cell maturation and degranulation via PTGDR. The polypeptide is Prostaglandin-H2 D-isomerase (PTGDS) (Equus caballus (Horse)).